A 166-amino-acid chain; its full sequence is Ferric nitrobindin-like protein (166 aa).

Residues 21-27 (GHWEGEG) carry the GXWXGXG motif.

The protein belongs to the nitrobindin family.

The sequence is that of Ferric nitrobindin-like protein from Cutibacterium acnes (strain DSM 16379 / KPA171202) (Propionibacterium acnes).